Reading from the N-terminus, the 411-residue chain is Snake venom metalloproteinase VMP1 (411 aa).

The first 20 residues, 1-20, serve as a signal peptide directing secretion; the sequence is MIQVLLVTICLAAFPYQGSS. Residues 21–189 constitute a propeptide that is removed on maturation; that stretch reads IILESGNVND…KKAFQLNLTP (169 aa). Positions 197–393 constitute a Peptidase M12B domain; it reads RYVELVIIAD…KNPQCILNKP (197 aa). E200 and D284 together coordinate Ca(2+). 3 cysteine pairs are disulfide-bonded: C308–C388, C348–C372, and C350–C355. Residue N311 is glycosylated (N-linked (GlcNAc...) asparagine). H333 serves as a coordination point for Zn(2+). The active site involves E334. Residues H337 and H343 each contribute to the Zn(2+) site. Ca(2+) is bound by residues C388, N391, V403, N406, L408, and E410.

This sequence belongs to the venom metalloproteinase (M12B) family. P-I subfamily. Monomer. It depends on Zn(2+) as a cofactor. Expressed by the venom gland.

Its subcellular location is the secreted. Its activity is regulated as follows. Inhibited by EDTA and 1,10-phenanthroline, but not by PMSF. This venom zinc protease has fibrinolytic activity. The recombinant enzyme cleaves both alpha- (FGA) and beta-chains (FGB) of fibrinogen, but not the gamma-chain. The recombinant protein does not produce hemorrhage in mice and does not have effect on ADP- or collagen-stimulated platelet aggregation. This Agkistrodon piscivorus leucostoma (Western cottonmouth) protein is Snake venom metalloproteinase VMP1.